The sequence spans 24 residues: Chaperonin GroEL (24 aa).

The protein belongs to the chaperonin (HSP60) family. Forms a cylinder of 14 subunits composed of two heptameric rings stacked back-to-back. Interacts with the co-chaperonin GroES.

It localises to the cytoplasm. It carries out the reaction ATP + H2O + a folded polypeptide = ADP + phosphate + an unfolded polypeptide.. Together with its co-chaperonin GroES, plays an essential role in assisting protein folding. The GroEL-GroES system forms a nano-cage that allows encapsulation of the non-native substrate proteins and provides a physical environment optimized to promote and accelerate protein folding. The chain is Chaperonin GroEL from Acinetobacter calcoaceticus.